The chain runs to 142 residues: Nucleoside diphosphate kinase (142 aa).

ATP-binding residues include K11, F59, R87, T93, R104, and N114. H117 (pros-phosphohistidine intermediate) is an active-site residue.

This sequence belongs to the NDK family. As to quaternary structure, homotetramer. It depends on Mg(2+) as a cofactor.

The protein resides in the cytoplasm. It catalyses the reaction a 2'-deoxyribonucleoside 5'-diphosphate + ATP = a 2'-deoxyribonucleoside 5'-triphosphate + ADP. The enzyme catalyses a ribonucleoside 5'-diphosphate + ATP = a ribonucleoside 5'-triphosphate + ADP. Major role in the synthesis of nucleoside triphosphates other than ATP. The ATP gamma phosphate is transferred to the NDP beta phosphate via a ping-pong mechanism, using a phosphorylated active-site intermediate. The protein is Nucleoside diphosphate kinase of Hahella chejuensis (strain KCTC 2396).